A 1203-amino-acid chain; its full sequence is Transmembrane channel-like protein 2 (1203 aa).

Disordered regions lie at residues M1 to R39 and P64 to K90. Acidic residues predominate over residues F73–K86. Residues V191–A213 form a helical membrane-spanning segment. Residue N225 is glycosylated (N-linked (GlcNAc...) asparagine). 6 consecutive transmembrane segments (helical) span residues Y276–L298, F369–M391, A406–I428, L441–L463, M665–L687, and F714–S736. N-linked (GlcNAc...) asparagine glycosylation occurs at N748. The helical transmembrane segment at I780–L802 threads the bilayer. 4 disordered regions span residues E826–P908, K927–Q1039, A1059–L1087, and N1112–D1203. The span at N865 to G874 shows a compositional bias: polar residues. The segment covering D898 to P908 has biased composition (low complexity). Positions K927–E945 are enriched in basic and acidic residues. Composition is skewed to low complexity over residues Q973 to S997 and S1022 to S1035. A compositionally biased stretch (polar residues) spans V1061–D1076. Basic and acidic residues-rich tracts occupy residues S1133–Q1147 and P1172–D1203.

Belongs to the TMC family.

It is found in the membrane. Its function is as follows. Probable ion channel. This is Transmembrane channel-like protein 2 (tmc-2) from Caenorhabditis elegans.